The primary structure comprises 118 residues: Basic phospholipase A2 PA-9C (118 aa).

7 disulfides stabilise this stretch: Cys-11/Cys-71, Cys-27/Cys-117, Cys-29/Cys-45, Cys-44/Cys-98, Cys-51/Cys-91, Cys-60/Cys-84, and Cys-78/Cys-89. Positions 28, 30, and 32 each coordinate Ca(2+). His-48 is a catalytic residue. Residue Asp-49 coordinates Ca(2+). Asp-92 is an active-site residue.

This sequence belongs to the phospholipase A2 family. Group I subfamily. D49 sub-subfamily. It depends on Ca(2+) as a cofactor. In terms of tissue distribution, expressed by the venom gland.

It is found in the secreted. It catalyses the reaction a 1,2-diacyl-sn-glycero-3-phosphocholine + H2O = a 1-acyl-sn-glycero-3-phosphocholine + a fatty acid + H(+). Its function is as follows. PLA2 catalyzes the calcium-dependent hydrolysis of the 2-acyl groups in 3-sn-phosphoglycerides. In Pseudechis australis (Mulga snake), this protein is Basic phospholipase A2 PA-9C.